Reading from the N-terminus, the 239-residue chain is Serine protease SplC (239 aa).

An N-terminal signal peptide occupies residues 1–36; it reads MNKNIVIKSMAALAILTSATGINAAVVEETQQIANA. Residues histidine 75, aspartate 113, and serine 193 each act as charge relay system in the active site.

This sequence belongs to the peptidase S1B family.

Its subcellular location is the secreted. The polypeptide is Serine protease SplC (splC) (Staphylococcus aureus (strain MSSA476)).